The sequence spans 130 residues: Small ribosomal subunit protein uS11 (130 aa).

Belongs to the universal ribosomal protein uS11 family. Part of the 30S ribosomal subunit. Interacts with proteins S7 and S18. Binds to IF-3.

In terms of biological role, located on the platform of the 30S subunit, it bridges several disparate RNA helices of the 16S rRNA. Forms part of the Shine-Dalgarno cleft in the 70S ribosome. The polypeptide is Small ribosomal subunit protein uS11 (Campylobacter curvus (strain 525.92)).